The following is a 523-amino-acid chain: GMP synthase [glutamine-hydrolyzing] (523 aa).

The region spanning 8 to 205 is the Glutamine amidotransferase type-1 domain; the sequence is KILILDFGSQ…VVNICGCETK (198 aa). Cysteine 85 (nucleophile) is an active-site residue. Active-site residues include histidine 179 and glutamate 181. One can recognise a GMPS ATP-PPase domain in the interval 206-398; the sequence is WTAENIIEDA…LGLPAEMINR (193 aa). Residue 233 to 239 coordinates ATP; that stretch reads SGGVDSS.

As to quaternary structure, homodimer.

The enzyme catalyses XMP + L-glutamine + ATP + H2O = GMP + L-glutamate + AMP + diphosphate + 2 H(+). The protein operates within purine metabolism; GMP biosynthesis; GMP from XMP (L-Gln route): step 1/1. Catalyzes the synthesis of GMP from XMP. The protein is GMP synthase [glutamine-hydrolyzing] of Haemophilus influenzae (strain 86-028NP).